Reading from the N-terminus, the 620-residue chain is Ran-binding protein 10 (620 aa).

The interval 1 to 34 (MAAATADPGAGSPQVGDSSGGATGCGLPSPGEQE) is disordered. Alanine 2 carries the post-translational modification N-acetylalanine. Positions 35 to 222 (LSRRLQRLYP…VDANFGQQPF (188 aa)) constitute a B30.2/SPRY domain. Residues 253-285 (WQAVLQNMVSSYLVHHGYCATATAFARMTETPI) enclose the LisH domain. Residues 291–348 (SIKNRQKIQKLVLEGRVGEAIETTQRFYPGLLEHNPNLLFMLKCRQFVEMVNGTDSEV) form the CTLH domain. Residues 347–398 (EVRSLSSRSPKSQDSYPGSPSLSPRHGPTSSHTHNTGADSPSCSNGVASTKS) are compositionally biased toward polar residues. Residues 347-459 (EVRSLSSRSP…TSDSEMEMEA (113 aa)) are disordered. Phosphoserine is present on serine 361. Tyrosine 362 carries the phosphotyrosine modification. A phosphoserine mark is found at serine 365, serine 367, serine 369, and serine 422. The span at 409–436 (SSSSSSSSSSSSSSPSSVNYSESNSTDS) shows a compositional bias: low complexity. The span at 437–450 (TKSQPHSSTSNQET) shows a compositional bias: polar residues. A phosphoserine mark is found at serine 451 and serine 453.

This sequence belongs to the RANBP9/10 family. May form homodimers. Identified in the CTLH complex that contains GID4, RANBP9 and/or RANBP10, MKLN1, MAEA, RMND5A (or alternatively its paralog RMND5B), GID8, ARMC8, WDR26 and YPEL5. Within this complex, MAEA, RMND5A (or alternatively its paralog RMND5B), GID8, WDR26, and RANBP9 and/or RANBP10 form the catalytic core, while GID4, MKLN1, ARMC8 and YPEL5 have ancillary roles. Interacts with RAN and RANBP9. Interacts with the HGF receptor MET. Interacts with AR. Interacts with TUBB1. Interacts with YPEL5. May interact with TUBB5. Interacts with DDX4.

It is found in the cytoplasm. It localises to the cytosol. The protein localises to the nucleus. May act as an adapter protein to couple membrane receptors to intracellular signaling pathways. Core component of the CTLH E3 ubiquitin-protein ligase complex that selectively accepts ubiquitin from UBE2H and mediates ubiquitination and subsequent proteasomal degradation of the transcription factor HBP1. Enhances dihydrotestosterone-induced transactivation activity of AR, as well as dexamethasone-induced transactivation activity of NR3C1, but does not affect estrogen-induced transactivation. Acts as a guanine nucleotide exchange factor (GEF) for RAN GTPase. May play an essential role in hemostasis and in maintaining microtubule dynamics with respect to both platelet shape and function. The sequence is that of Ran-binding protein 10 (RANBP10) from Bos taurus (Bovine).